We begin with the raw amino-acid sequence, 167 residues long: Respiratory supercomplex factor 1-A, mitochondrial (167 aa).

One can recognise an HIG1 domain in the interval 1–86; that stretch reads MCSDFEEETS…TERKQRREFE (86 aa). 2 helical membrane passes run 21–38 and 53–75; these read EPLIPLGCAATCYALYRA and MFRARIYAQFFTLLAVVAGGMYY. A coiled-coil region spans residues 75 to 107; the sequence is YKTERKQRREFEKKVEERKAQEKRDAWLRELEA.

The protein belongs to the RCF1 family. Associates with the respiratory chain complex III/complex IV supercomplex.

Its subcellular location is the mitochondrion membrane. Functionally, cytochrome c oxidase subunit which plays a role in assembly of respiratory supercomplexes. This Talaromyces marneffei (strain ATCC 18224 / CBS 334.59 / QM 7333) (Penicillium marneffei) protein is Respiratory supercomplex factor 1-A, mitochondrial (rcf1-A).